The primary structure comprises 351 residues: Protein pelota homolog (351 aa).

This sequence belongs to the eukaryotic release factor 1 family. Pelota subfamily. Monomer. The cofactor is a divalent metal cation.

It is found in the cytoplasm. Its function is as follows. May function in recognizing stalled ribosomes, interact with stem-loop structures in stalled mRNA molecules, and effect endonucleolytic cleavage of the mRNA. May play a role in the release non-functional ribosomes and degradation of damaged mRNAs. Has endoribonuclease activity. The sequence is that of Protein pelota homolog from Methanosphaera stadtmanae (strain ATCC 43021 / DSM 3091 / JCM 11832 / MCB-3).